Here is a 308-residue protein sequence, read N- to C-terminus: uncharacterized protein (308 aa).

The active site involves Glu-59.

Belongs to the PhzF family.

This is an uncharacterized protein from Deinococcus radiodurans (strain ATCC 13939 / DSM 20539 / JCM 16871 / CCUG 27074 / LMG 4051 / NBRC 15346 / NCIMB 9279 / VKM B-1422 / R1).